A 1006-amino-acid polypeptide reads, in one-letter code: Pleckstrin homology domain-containing family G member 5 (1006 aa).

Disordered regions lie at residues 1–71 (MHYD…HTDD), 148–198 (PAKP…DILA), and 212–242 (EASIPGQEPPTPSSCSLPSGSSGSTNTGDSW). The segment covering 36-45 (DLEEEEEESS) has biased composition (acidic residues). 2 stretches are compositionally biased toward basic and acidic residues: residues 151-165 (PGDEGKVEQGMKDSK) and 183-194 (ERVDAQSRRESL). Residues 224–242 (SSCSLPSGSSGSTNTGDSW) are compositionally biased toward low complexity. Positions 336-528 (HQQEAVWELL…ERFIHHVNAC (193 aa)) constitute a DH domain. One can recognise a PH domain in the interval 584-684 (QLLLEGSLRM…WVDTIYNAQN (101 aa)). Disordered stretches follow at residues 690–754 (RAQE…ASDG), 768–820 (DTLS…SAYG), and 837–863 (AELVPRAPESPRVPSPPPSPRLRRRTP). The span at 704–726 (LEEEEDEQEEEEEEEEEEEEGED) shows a compositional bias: acidic residues. 2 stretches are compositionally biased toward polar residues: residues 727–754 (SGTSAASSPTIMRKSSGSPDSQHCASDG) and 769–785 (TLSSPEFDSGPFSSQSD). At Thr-729 the chain carries Phosphothreonine. Position 734 is a phosphoserine (Ser-734). Over residues 786 to 803 (ETSLSTTASSATPTSELL) the composition is skewed to low complexity. The segment covering 847–856 (PRVPSPPPSP) has biased composition (pro residues). A phosphoserine mark is found at Ser-851, Ser-876, and Ser-881. A disordered region spans residues 950-979 (AGSHRKRCGDLPSGASPRVQPEPPPGVSAQ).

In terms of assembly, interacts with GIPC1/synectin and RHOA. Predominantly expressed in the peripheral nervous system and brain. Highest expression is observed in heart, lung, kidney, testis and moderate expression is present in spleen, pancreas, skeletal muscle, ovary and liver. Weakly expressed in glioblastoma (GBM) cell lines.

The protein resides in the cytoplasm. It is found in the perinuclear region. It localises to the cell membrane. The protein localises to the cell junction. Its subcellular location is the cell projection. The protein resides in the lamellipodium. Functionally, functions as a guanine exchange factor (GEF) for RAB26 and thus regulates autophagy of synaptic vesicles in axon terminal of motoneurons. Involved in the control of neuronal cell differentiation. Plays a role in angiogenesis through regulation of endothelial cells chemotaxis. Also affects the migration, adhesion, and matrix/bone degradation in macrophages and osteoclasts. In Homo sapiens (Human), this protein is Pleckstrin homology domain-containing family G member 5 (PLEKHG5).